Here is a 97-residue protein sequence, read N- to C-terminus: Sugar transporter SemiSWEET (97 aa).

Residues 4-70 (IERIGKALEP…IYGIYHKNPT (67 aa)) form the PQ-loop domain. A run of 3 helical transmembrane segments spans residues 15-35 (MLVMGLISPLATMPQLYKLYV), 44-65 (LSLTTWLLYSFIALLWTIYGIY), and 71-91 (IWVGNCLGFLMYVAMVVGIIA).

Homodimer.

Its subcellular location is the cell membrane. Functionally, the homodimer mediates transmembrane sugar transport down a concentration gradient. Transport is probably effected by rocking-type movements, where a cargo-binding cavity opens first on one and then on the other side of the membrane. The sequence is that of Sugar transporter SemiSWEET from Vibrio sp. (strain N418).